The following is a 230-amino-acid chain: 2,3-bisphosphoglycerate-dependent phosphoglycerate mutase (230 aa).

Residues 8–15 (RHGESEWN), 21–22 (TG), Arg60, 87–90 (ERHY), Lys98, 114–115 (RR), and 183–184 (GN) contribute to the substrate site. His9 acts as the Tele-phosphohistidine intermediate in catalysis. Residue Glu87 is the Proton donor/acceptor of the active site.

The protein belongs to the phosphoglycerate mutase family. BPG-dependent PGAM subfamily.

It carries out the reaction (2R)-2-phosphoglycerate = (2R)-3-phosphoglycerate. It functions in the pathway carbohydrate degradation; glycolysis; pyruvate from D-glyceraldehyde 3-phosphate: step 3/5. Catalyzes the interconversion of 2-phosphoglycerate and 3-phosphoglycerate. The polypeptide is 2,3-bisphosphoglycerate-dependent phosphoglycerate mutase (Streptococcus pneumoniae (strain ATCC BAA-255 / R6)).